The chain runs to 910 residues: Protein translocase subunit SecA (910 aa).

Residues glutamine 87, 105–109, and aspartate 508 contribute to the ATP site; that span reads GEGKT. A compositionally biased stretch (basic and acidic residues) spans 558–568; that stretch reads RHESRRIDNQL. Disordered regions lie at residues 558–580 and 873–910; these read RHESRRIDNQLRGRSGRQGDPGS and AAQQGIAQVQRDEPKIGRNDPCPCGSGKKYKHCHGQLS. Positions 894, 896, 905, and 906 each coordinate Zn(2+). Residues 900-910 are compositionally biased toward basic residues; sequence KKYKHCHGQLS.

It belongs to the SecA family. In terms of assembly, monomer and homodimer. Part of the essential Sec protein translocation apparatus which comprises SecA, SecYEG and auxiliary proteins SecDF-YajC and YidC. The cofactor is Zn(2+).

It localises to the cell inner membrane. The protein localises to the cytoplasm. The catalysed reaction is ATP + H2O + cellular proteinSide 1 = ADP + phosphate + cellular proteinSide 2.. Its function is as follows. Part of the Sec protein translocase complex. Interacts with the SecYEG preprotein conducting channel. Has a central role in coupling the hydrolysis of ATP to the transfer of proteins into and across the cell membrane, serving both as a receptor for the preprotein-SecB complex and as an ATP-driven molecular motor driving the stepwise translocation of polypeptide chains across the membrane. This is Protein translocase subunit SecA from Stenotrophomonas maltophilia (strain R551-3).